A 414-amino-acid polypeptide reads, in one-letter code: Coenzyme A biosynthesis bifunctional protein CoaBC (414 aa).

The interval 1–191 is phosphopantothenoylcysteine decarboxylase; that stretch reads MSARKRIVVG…ALPYDMAGVK (191 aa). Residues 192–414 are phosphopantothenate--cysteine ligase; sequence ALVTAGGTRE…IAAFLKSQDG (223 aa). CTP-binding positions include 275 to 277, D281, K291, 293 to 294, 308 to 311, F332, K350, and K354; these read MAA, KK, and DDVL.

In the N-terminal section; belongs to the HFCD (homo-oligomeric flavin containing Cys decarboxylase) superfamily. It in the C-terminal section; belongs to the PPC synthetase family. Homododecamer. Mg(2+) is required as a cofactor. It depends on FMN as a cofactor.

It carries out the reaction N-[(R)-4-phosphopantothenoyl]-L-cysteine + H(+) = (R)-4'-phosphopantetheine + CO2. The enzyme catalyses (R)-4'-phosphopantothenate + L-cysteine + CTP = N-[(R)-4-phosphopantothenoyl]-L-cysteine + CMP + diphosphate + H(+). Its pathway is cofactor biosynthesis; coenzyme A biosynthesis; CoA from (R)-pantothenate: step 2/5. It functions in the pathway cofactor biosynthesis; coenzyme A biosynthesis; CoA from (R)-pantothenate: step 3/5. Two related chemical scaffolds that potently inhibit the activity of the CoaB moiety of CoaBC through a cryptic allosteric site that sits in the dimer interface region of the CoaB enzyme were identified. Catalyzes two sequential steps in the biosynthesis of coenzyme A. In the first step cysteine is conjugated to 4'-phosphopantothenate to form 4-phosphopantothenoylcysteine. In the second step the latter compound is decarboxylated to form 4'-phosphopantotheine. The protein is Coenzyme A biosynthesis bifunctional protein CoaBC of Mycolicibacterium smegmatis (strain ATCC 700084 / mc(2)155) (Mycobacterium smegmatis).